Reading from the N-terminus, the 697-residue chain is Elongation factor G (697 aa).

The 280-residue stretch at 8–287 (ERVRNIGIAA…AVVDYLPAPT (280 aa)) folds into the tr-type G domain. GTP contacts are provided by residues 17–24 (AHIDAGKT), 81–85 (DTPGH), and 135–138 (NKMD).

This sequence belongs to the TRAFAC class translation factor GTPase superfamily. Classic translation factor GTPase family. EF-G/EF-2 subfamily.

The protein resides in the cytoplasm. Its function is as follows. Catalyzes the GTP-dependent ribosomal translocation step during translation elongation. During this step, the ribosome changes from the pre-translocational (PRE) to the post-translocational (POST) state as the newly formed A-site-bound peptidyl-tRNA and P-site-bound deacylated tRNA move to the P and E sites, respectively. Catalyzes the coordinated movement of the two tRNA molecules, the mRNA and conformational changes in the ribosome. The protein is Elongation factor G (fusA) of Arthrospira platensis (Spirulina platensis).